Here is a 295-residue protein sequence, read N- to C-terminus: Shikimate dehydrogenase (NADP(+)) (295 aa).

Shikimate contacts are provided by residues 24–26 (SRS) and Thr71. Residue Lys75 is the Proton acceptor of the active site. Glu87 contributes to the NADP(+) binding site. Shikimate contacts are provided by Asn96 and Asp111. NADP(+) is bound by residues 136–140 (GAGGA), 160–165 (NRTASR), and Met233. Position 235 (Tyr235) interacts with shikimate. Gly256 is an NADP(+) binding site.

The protein belongs to the shikimate dehydrogenase family. Homodimer.

The enzyme catalyses shikimate + NADP(+) = 3-dehydroshikimate + NADPH + H(+). The protein operates within metabolic intermediate biosynthesis; chorismate biosynthesis; chorismate from D-erythrose 4-phosphate and phosphoenolpyruvate: step 4/7. Functionally, involved in the biosynthesis of the chorismate, which leads to the biosynthesis of aromatic amino acids. Catalyzes the reversible NADPH linked reduction of 3-dehydroshikimate (DHSA) to yield shikimate (SA). This chain is Shikimate dehydrogenase (NADP(+)), found in Cupriavidus necator (strain ATCC 17699 / DSM 428 / KCTC 22496 / NCIMB 10442 / H16 / Stanier 337) (Ralstonia eutropha).